Consider the following 326-residue polypeptide: Fructose-1,6-bisphosphatase class 1 (326 aa).

The Mg(2+) site is built by glutamate 90, aspartate 111, leucine 113, and aspartate 114. Substrate is bound by residues 114–117, tyrosine 222, and lysine 253; that span reads DGSS. Glutamate 259 lines the Mg(2+) pocket.

This sequence belongs to the FBPase class 1 family. Homotetramer. Requires Mg(2+) as cofactor.

The protein localises to the cytoplasm. The catalysed reaction is beta-D-fructose 1,6-bisphosphate + H2O = beta-D-fructose 6-phosphate + phosphate. It participates in carbohydrate biosynthesis; gluconeogenesis. This chain is Fructose-1,6-bisphosphatase class 1, found in Citrifermentans bemidjiense (strain ATCC BAA-1014 / DSM 16622 / JCM 12645 / Bem) (Geobacter bemidjiensis).